Consider the following 206-residue polypeptide: Undecaprenyl-diphosphatase (206 aa).

Helical transmembrane passes span 5 to 25 (YYWI…LIGG), 53 to 73 (FLSK…LLIF), 79 to 99 (IGIT…VSKY), 138 to 158 (VTLL…EAVL), and 164 to 184 (VYVG…GSWI).

It is found in the cell membrane. It catalyses the reaction di-trans,octa-cis-undecaprenyl diphosphate + H2O = di-trans,octa-cis-undecaprenyl phosphate + phosphate + H(+). In Sulfolobus acidocaldarius (strain ATCC 33909 / DSM 639 / JCM 8929 / NBRC 15157 / NCIMB 11770), this protein is Undecaprenyl-diphosphatase (sepP).